A 131-amino-acid polypeptide reads, in one-letter code: ATP synthase epsilon chain, chloroplastic (131 aa).

It belongs to the ATPase epsilon chain family. F-type ATPases have 2 components, CF(1) - the catalytic core - and CF(0) - the membrane proton channel. CF(1) has five subunits: alpha(3), beta(3), gamma(1), delta(1), epsilon(1). CF(0) has three main subunits: a, b and c.

It is found in the plastid. It localises to the chloroplast thylakoid membrane. Its function is as follows. Produces ATP from ADP in the presence of a proton gradient across the membrane. The chain is ATP synthase epsilon chain, chloroplastic from Oltmannsiellopsis viridis (Marine flagellate).